The chain runs to 701 residues: Cytosolic endo-beta-N-acetylglucosaminidase 2 (701 aa).

The protein belongs to the glycosyl hydrolase 85 family.

Its subcellular location is the cytoplasm. The protein localises to the cytosol. The enzyme catalyses an N(4)-(oligosaccharide-(1-&gt;3)-[oligosaccharide-(1-&gt;6)]-beta-D-Man-(1-&gt;4)-beta-D-GlcNAc-(1-&gt;4)-alpha-D-GlcNAc)-L-asparaginyl-[protein] + H2O = an oligosaccharide-(1-&gt;3)-[oligosaccharide-(1-&gt;6)]-beta-D-Man-(1-&gt;4)-D-GlcNAc + N(4)-(N-acetyl-beta-D-glucosaminyl)-L-asparaginyl-[protein]. Endoglycosidase that releases N-glycans from glycoproteins by cleaving the beta-1,4-glycosidic bond in the N,N'-diacetylchitobiose core. Involved in the production of high-mannose type N-glycans during plant development and fruit maturation. The chain is Cytosolic endo-beta-N-acetylglucosaminidase 2 from Arabidopsis thaliana (Mouse-ear cress).